Consider the following 365-residue polypeptide: Alanine racemase (365 aa).

Lys-32 acts as the Proton acceptor; specific for D-alanine in catalysis. Lys-32 is subject to N6-(pyridoxal phosphate)lysine. Residue Arg-128 participates in substrate binding. Tyr-257 serves as the catalytic Proton acceptor; specific for L-alanine. Met-305 serves as a coordination point for substrate.

Belongs to the alanine racemase family. Pyridoxal 5'-phosphate serves as cofactor.

The catalysed reaction is L-alanine = D-alanine. Its pathway is amino-acid biosynthesis; D-alanine biosynthesis; D-alanine from L-alanine: step 1/1. In terms of biological role, catalyzes the interconversion of L-alanine and D-alanine. May also act on other amino acids. This chain is Alanine racemase (alr), found in Francisella tularensis subsp. holarctica (strain FTNF002-00 / FTA).